The primary structure comprises 122 residues: Large ribosomal subunit protein uL14 (122 aa).

It belongs to the universal ribosomal protein uL14 family. As to quaternary structure, part of the 50S ribosomal subunit. Forms a cluster with proteins L3 and L19. In the 70S ribosome, L14 and L19 interact and together make contacts with the 16S rRNA in bridges B5 and B8.

Binds to 23S rRNA. Forms part of two intersubunit bridges in the 70S ribosome. The sequence is that of Large ribosomal subunit protein uL14 from Nitrobacter winogradskyi (strain ATCC 25391 / DSM 10237 / CIP 104748 / NCIMB 11846 / Nb-255).